Reading from the N-terminus, the 515-residue chain is MQHDNKVIILDFGSQFTQLIARRIREAGVYSEIHPCNVDPQKIKDLNPGALILSGGPSSVLEDESPQLDPSLLELGVPVLGICYGMQLMTNDLGGRVVSSEDREYGRAEFKGDSSCTIFEGIEDIEKLTVWMSHGDRVEAIPEGFKVCGTTESIPFAAMANEEKKMYALQFHPEVAHTESGTTIINNFVFKVAGLKADWTMSSFVENCIEEMREKIGDNQVVLGLSGGIDSTVVAVLLHKAIGKRLHCIFVDNGLLRMHEREEVIGFLEEHFELNVKCVDSAELFLDKLKGVEDPEKKRKLIGYTFIDVFNEEASALKDVKFLAQGTLYPDVIESESFKGPSAVIKSHHNVGGLPEDMDLDLVEPLRELFKDEVRKVAYELGLPEFIIWRQPFPGPGLAIRVLGEITEERLEILRQADKIVQNEMHASGWYRKVWQGFAVLLPLKTVGVMGDDRTYEHVIALRIVDSIDAMTADWSRIPNDILARMSNRIINEVKGVNRVVLDISSKPPATIEWE.

The 193-residue stretch at 6 to 198 (KVIILDFGSQ…VFKVAGLKAD (193 aa)) folds into the Glutamine amidotransferase type-1 domain. The active-site Nucleophile is C83. Catalysis depends on residues H172 and E174. Positions 199-390 (WTMSSFVENC…LGLPEFIIWR (192 aa)) constitute a GMPS ATP-PPase domain. 226–232 (SGGIDST) provides a ligand contact to ATP.

As to quaternary structure, homodimer.

It carries out the reaction XMP + L-glutamine + ATP + H2O = GMP + L-glutamate + AMP + diphosphate + 2 H(+). Its pathway is purine metabolism; GMP biosynthesis; GMP from XMP (L-Gln route): step 1/1. In terms of biological role, catalyzes the synthesis of GMP from XMP. This chain is GMP synthase [glutamine-hydrolyzing], found in Maridesulfovibrio salexigens (strain ATCC 14822 / DSM 2638 / NCIMB 8403 / VKM B-1763) (Desulfovibrio salexigens).